Consider the following 415-residue polypeptide: Zona pellucida-like domain-containing protein 1 (415 aa).

A signal peptide spans Met-1–Ala-19. Topologically, residues Gln-20–Ser-372 are extracellular. The 278-residue stretch at Tyr-43–Asp-320 folds into the ZP domain. Disulfide bonds link Cys-44–Cys-155 and Cys-79–Cys-104. Asn-121 and Asn-164 each carry an N-linked (GlcNAc...) asparagine glycan. Intrachain disulfides connect Cys-235–Cys-296 and Cys-255–Cys-313. The segment at Arg-323 to Pro-360 is disordered. Composition is skewed to polar residues over residues Thr-325–Ala-336 and Thr-350–Ser-359. Residues Ala-373–Leu-393 traverse the membrane as a helical segment. At Ala-394 to Asp-415 the chain is on the cytoplasmic side.

In terms of processing, proteolytically cleaved before the transmembrane segment to yield the secreted form found in the extracellular matrix of the cupula. In terms of tissue distribution, detected in placenta, kidney, lung, pancreas and at very low level in other tissues.

The protein localises to the cytoplasmic vesicle membrane. The protein resides in the secreted. It is found in the extracellular space. Its subcellular location is the extracellular matrix. Functionally, glycoprotein which is a component of the gelatinous extracellular matrix in the cupulae of the vestibular organ. The polypeptide is Zona pellucida-like domain-containing protein 1 (ZPLD1) (Homo sapiens (Human)).